We begin with the raw amino-acid sequence, 169 residues long: S-ribosylhomocysteine lyase (169 aa).

Fe cation contacts are provided by histidine 54, histidine 58, and cysteine 128.

The protein belongs to the LuxS family. In terms of assembly, homodimer. Fe cation serves as cofactor.

It catalyses the reaction S-(5-deoxy-D-ribos-5-yl)-L-homocysteine = (S)-4,5-dihydroxypentane-2,3-dione + L-homocysteine. Involved in the synthesis of autoinducer 2 (AI-2) which is secreted by bacteria and is used to communicate both the cell density and the metabolic potential of the environment. The regulation of gene expression in response to changes in cell density is called quorum sensing. Catalyzes the transformation of S-ribosylhomocysteine (RHC) to homocysteine (HC) and 4,5-dihydroxy-2,3-pentadione (DPD). In Shewanella amazonensis (strain ATCC BAA-1098 / SB2B), this protein is S-ribosylhomocysteine lyase.